Consider the following 304-residue polypeptide: Secreted mono- and diacylglycerol lipase MDL4 (304 aa).

Residues 1–19 (MRFGGVVSLVLGFIVSVLA) form the signal peptide. A disulfide bridge connects residues Cys55 and Cys297. N-linked (GlcNAc...) asparagine glycosylation is found at Asn102 and Asn161. The active-site Nucleophile is the Ser171. Residue Asp228 is part of the active site. N-linked (GlcNAc...) asparagine glycosylation occurs at Asn253. The active site involves His281.

Belongs to the AB hydrolase superfamily. Lipase family. Class 3 subfamily.

It localises to the secreted. The protein localises to the cell wall. It carries out the reaction a monoacylglycerol + H2O = glycerol + a fatty acid + H(+). It catalyses the reaction a diacylglycerol + H2O = a monoacylglycerol + a fatty acid + H(+). Functionally, secreted lipase involved in Dandruff and seborrheic dermatitis (D/SD) probably via lipase-mediated breakdown of sebaceous lipids and release of irritating free fatty acids. Shows activity against monoglyceride and diglyceride substrates, but not triglyceride substrates and does not exhibit regio-selective production of diacylglycerols. Cleaves oleic acid from 1,2 isomers of diolein on both the 1 and the 2 position of the glycerol backbone, resulting mainly in free fatty acids but no monoolein is detected. Shows activity on monoolein and liberates mostly free fatty acids, but can also perform the reverse reaction and produce diolein. The chain is Secreted mono- and diacylglycerol lipase MDL4 from Malassezia globosa (strain ATCC MYA-4612 / CBS 7966) (Dandruff-associated fungus).